A 325-amino-acid polypeptide reads, in one-letter code: Tetraacyldisaccharide 4'-kinase (325 aa).

58 to 65 (TVGGSGKT) serves as a coordination point for ATP.

The protein belongs to the LpxK family.

It catalyses the reaction a lipid A disaccharide + ATP = a lipid IVA + ADP + H(+). It functions in the pathway glycolipid biosynthesis; lipid IV(A) biosynthesis; lipid IV(A) from (3R)-3-hydroxytetradecanoyl-[acyl-carrier-protein] and UDP-N-acetyl-alpha-D-glucosamine: step 6/6. In terms of biological role, transfers the gamma-phosphate of ATP to the 4'-position of a tetraacyldisaccharide 1-phosphate intermediate (termed DS-1-P) to form tetraacyldisaccharide 1,4'-bis-phosphate (lipid IVA). This chain is Tetraacyldisaccharide 4'-kinase, found in Coxiella burnetii (strain Dugway 5J108-111).